A 99-amino-acid chain; its full sequence is UPF0473 protein SMU_2077c (99 aa).

This sequence belongs to the UPF0473 family.

The protein is UPF0473 protein SMU_2077c of Streptococcus mutans serotype c (strain ATCC 700610 / UA159).